The primary structure comprises 528 residues: Butyrophilin subfamily 2 member A2 (528 aa).

The signal sequence occupies residues 1–29 (MESAAALHFSRPASLLLLLLLSLCALVSA). Residues 30 to 249 (QVTVVGPTDP…SFMPSVSPCA (220 aa)) lie on the Extracellular side of the membrane. One can recognise an Ig-like V-type domain in the interval 31-142 (VTVVGPTDPI…SYDEAILHLI (112 aa)). 3 N-linked (GlcNAc...) asparagine glycosylation sites follow: Asn-47, Asn-115, and Asn-121. Cys-52 and Cys-126 are disulfide-bonded. Positions 150 to 232 (PLIEMRGHED…NNTLLSQKKE (83 aa)) constitute an Ig-like C2-type domain. The helical transmembrane segment at 250–270 (VALPIVVVILMILFAVCMYWI) threads the bilayer. The stretch at 270–320 (INKLQKEKKILSGEKEFERETREIAVKELEKERVQKEEELQVKEKLQEELR) forms a coiled coil. Over 271-528 (NKLQKEKKIL…LHRVGTHQSL (258 aa)) the chain is Cytoplasmic. The 197-residue stretch at 311 to 507 (VKEKLQEELR…IFICPALTGA (197 aa)) folds into the B30.2/SPRY domain.

The protein belongs to the immunoglobulin superfamily. BTN/MOG family. In terms of processing, N-glycosylated.

It localises to the membrane. In terms of biological role, inhibits the proliferation of CD4 and CD8 T-cells activated by anti-CD3 antibodies, T-cell metabolism and IL2 and IFNG secretion. This is Butyrophilin subfamily 2 member A2 (BTN2A2) from Pongo abelii (Sumatran orangutan).